We begin with the raw amino-acid sequence, 269 residues long: LOB domain-containing protein 6 (269 aa).

An LOB domain is found at 37 to 138 (SPCAACKFLR…QDLARAKFEL (102 aa)).

Belongs to the LOB domain-containing protein family.

Its subcellular location is the nucleus. Functionally, negative regulator of cell proliferation in the adaxial side of leaves. Regulates the formation of a symmetric lamina and the establishment of venation. This Oryza sativa subsp. indica (Rice) protein is LOB domain-containing protein 6 (LBD6).